The sequence spans 341 residues: Phenylalanine--tRNA ligase alpha subunit (341 aa).

Residue Glu256 participates in Mg(2+) binding.

Belongs to the class-II aminoacyl-tRNA synthetase family. Phe-tRNA synthetase alpha subunit type 1 subfamily. Tetramer of two alpha and two beta subunits. Requires Mg(2+) as cofactor.

The protein localises to the cytoplasm. The catalysed reaction is tRNA(Phe) + L-phenylalanine + ATP = L-phenylalanyl-tRNA(Phe) + AMP + diphosphate + H(+). In Chlamydia abortus (strain DSM 27085 / S26/3) (Chlamydophila abortus), this protein is Phenylalanine--tRNA ligase alpha subunit.